We begin with the raw amino-acid sequence, 56 residues long: Small ribosomal subunit protein bS21 (56 aa).

This sequence belongs to the bacterial ribosomal protein bS21 family.

The sequence is that of Small ribosomal subunit protein bS21 from Dictyoglomus thermophilum (strain ATCC 35947 / DSM 3960 / H-6-12).